The sequence spans 297 residues: Phosphatidylglycerol--prolipoprotein diacylglyceryl transferase (297 aa).

Transmembrane regions (helical) follow at residues 20–40 (FITIRWYGLLISVSVLIGLFV), 57–77 (EILPSLIISSILGARAYYVIF), 105–125 (AVWEGGIAIHGGLIGGLISII), and 133–153 (INLKTFIDILIPSIILGQSIG). Residue Arg154 participates in a 1,2-diacyl-sn-glycero-3-phospho-(1'-sn-glycerol) binding. Transmembrane regions (helical) follow at residues 193–213 (PTFLYESLWNLLIFIALIIIF), 225–245 (GFISFLYLISYSFGRFWIEGL), and 266–286 (AQFISIFLFSSGLIGIFFLRL).

Belongs to the Lgt family.

The protein localises to the cell inner membrane. The enzyme catalyses L-cysteinyl-[prolipoprotein] + a 1,2-diacyl-sn-glycero-3-phospho-(1'-sn-glycerol) = an S-1,2-diacyl-sn-glyceryl-L-cysteinyl-[prolipoprotein] + sn-glycerol 1-phosphate + H(+). It participates in protein modification; lipoprotein biosynthesis (diacylglyceryl transfer). Catalyzes the transfer of the diacylglyceryl group from phosphatidylglycerol to the sulfhydryl group of the N-terminal cysteine of a prolipoprotein, the first step in the formation of mature lipoproteins. This is Phosphatidylglycerol--prolipoprotein diacylglyceryl transferase from Prochlorococcus marinus (strain MIT 9215).